The primary structure comprises 71 residues: ATP synthase subunit c (71 aa).

2 helical membrane passes run 9 to 29 (MIGY…IFAA) and 49 to 69 (LLGF…AFVI).

This sequence belongs to the ATPase C chain family. F-type ATPases have 2 components, F(1) - the catalytic core - and F(0) - the membrane proton channel. F(1) has five subunits: alpha(3), beta(3), gamma(1), delta(1), epsilon(1). F(0) has three main subunits: a(1), b(2) and c(10-14). The alpha and beta chains form an alternating ring which encloses part of the gamma chain. F(1) is attached to F(0) by a central stalk formed by the gamma and epsilon chains, while a peripheral stalk is formed by the delta and b chains.

It is found in the cell membrane. F(1)F(0) ATP synthase produces ATP from ADP in the presence of a proton or sodium gradient. F-type ATPases consist of two structural domains, F(1) containing the extramembraneous catalytic core and F(0) containing the membrane proton channel, linked together by a central stalk and a peripheral stalk. During catalysis, ATP synthesis in the catalytic domain of F(1) is coupled via a rotary mechanism of the central stalk subunits to proton translocation. In terms of biological role, key component of the F(0) channel; it plays a direct role in translocation across the membrane. A homomeric c-ring of between 10-14 subunits forms the central stalk rotor element with the F(1) delta and epsilon subunits. This Micrococcus luteus (strain ATCC 4698 / DSM 20030 / JCM 1464 / CCM 169 / CCUG 5858 / IAM 1056 / NBRC 3333 / NCIMB 9278 / NCTC 2665 / VKM Ac-2230) (Micrococcus lysodeikticus) protein is ATP synthase subunit c.